The sequence spans 318 residues: Glycine--tRNA ligase alpha subunit (318 aa).

Belongs to the class-II aminoacyl-tRNA synthetase family. As to quaternary structure, tetramer of two alpha and two beta subunits.

Its subcellular location is the cytoplasm. The catalysed reaction is tRNA(Gly) + glycine + ATP = glycyl-tRNA(Gly) + AMP + diphosphate. The chain is Glycine--tRNA ligase alpha subunit from Methylibium petroleiphilum (strain ATCC BAA-1232 / LMG 22953 / PM1).